Consider the following 131-residue polypeptide: MDKKTIYFICTGNSCRSQMAEGWGREILGEDWNVYSAGIETHGVNPKAIEAMKEVDIDISNHTSDLIDNHILKQSDLVVTLCSDADDNCPILPPNVKKEHWGLEDPAGKEWSEFQRVRDEIKLAIENFKLR.

Catalysis depends on nucleophile residues Cys10, Cys82, and Cys89. Disulfide bonds link Cys10–Cys82 and Cys82–Cys89.

This sequence belongs to the low molecular weight phosphotyrosine protein phosphatase family. Thioredoxin-coupled ArsC subfamily.

Its subcellular location is the cytoplasm. It carries out the reaction arsenate + [thioredoxin]-dithiol + H(+) = arsenite + [thioredoxin]-disulfide + H2O. In terms of biological role, catalyzes the reduction of arsenate [As(V)] to arsenite [As(III)]. The sequence is that of Arsenate reductase from Staphylococcus xylosus.